Consider the following 97-residue polypeptide: MGKGGGYVTVAAEEVEELRRRNGELEREMEEMKKEMVQLWRRTVVAEEAEERLCSQLAELEVESLDQARDYHSRIVFLMDQISRLSSSSLEVVVTNS.

Residues 8-42 adopt a coiled-coil conformation; that stretch reads VTVAAEEVEELRRRNGELEREMEEMKKEMVQLWRR.

In Arabidopsis thaliana (Mouse-ear cress), this protein is Protein RESPONSE TO LOW SULFUR 3.